A 410-amino-acid chain; its full sequence is Peptidase T (410 aa).

H79 is a Zn(2+) binding site. The active site involves D81. D142 is a binding site for Zn(2+). E176 (proton acceptor) is an active-site residue. E177, D199, and H381 together coordinate Zn(2+).

The protein belongs to the peptidase M20B family. It depends on Zn(2+) as a cofactor.

Its subcellular location is the cytoplasm. The enzyme catalyses Release of the N-terminal residue from a tripeptide.. Functionally, cleaves the N-terminal amino acid of tripeptides. This Bacillus mycoides (strain KBAB4) (Bacillus weihenstephanensis) protein is Peptidase T.